The following is a 334-amino-acid chain: Photosystem II assembly protein Ycf48 (334 aa).

Residues 1-22 (MAKMLKLWRLVLLAAFSLLLMA) form the signal peptide.

It belongs to the Ycf48 family. Part of early PSII assembly complexes which includes D1 (psbA) and PsbI; not found in mature PSII. Binds to the lumenal side of PSII complexes. Interacts with YidC.

It localises to the cellular thylakoid lumen. A factor required for optimal assembly of photosystem II (PSII), acting in the early stages of PSII assembly. Also plays a role in replacement of photodamaged D1 (psbA). Assists YidC in synthesis of chlorophyll-binding proteins. This chain is Photosystem II assembly protein Ycf48, found in Synechococcus sp. (strain JA-3-3Ab) (Cyanobacteria bacterium Yellowstone A-Prime).